We begin with the raw amino-acid sequence, 375 residues long: Alpha-2,8-sialyltransferase 8B (375 aa).

Topologically, residues 1–6 are cytoplasmic; that stretch reads MQLQFR. The chain crosses the membrane as a helical; Signal-anchor for type II membrane protein span at residues 7 to 23; it reads SWMLAALTLLVVFLIFA. Residues 24-375 lie on the Lumenal side of the membrane; sequence DISEIEEEIG…LTVGQCDGAT (352 aa). 4 N-linked (GlcNAc...) asparagine glycosylation sites follow: Asn-60, Asn-72, Asn-89, and Asn-134. 2 cysteine pairs are disulfide-bonded: Cys-157-Cys-307 and Cys-171-Cys-371. Asn-162 and Asn-185 together coordinate CMP-N-acetyl-beta-neuraminate. N-linked (GlcNAc...) asparagine glycosylation is found at Asn-219 and Asn-234. CMP-N-acetyl-beta-neuraminate is bound by residues Thr-294, Thr-295, Gly-296, Trp-316, Tyr-329, and His-330. His-346 acts as the Proton donor/acceptor in catalysis.

It belongs to the glycosyltransferase 29 family. Post-translationally, autopolysialylated. Autopolysialylation is not a prerequisite for the polysialylation acitity, but enhances the polysialylation acitity.

It localises to the golgi apparatus membrane. The protein localises to the secreted. It is found in the cell membrane. The enzyme catalyses [N-acetyl-alpha-D-neuraminosyl-(2-&gt;8)](n) + CMP-N-acetyl-beta-neuraminate = [N-acetyl-alpha-D-neuraminosyl-(2-&gt;8)](n+1) + CMP + H(+). It functions in the pathway protein modification; protein glycosylation. Catalyzes the transfer of a sialic acid from a CMP-linked sialic acid donor onto a terminal alpha-2,3-, alpha-2,6-, or alpha-2,8-linked sialic acid of an N-linked glycan acceptor through alpha-2,8-linkages. Therefore, participates in polysialic acid synthesis on various sialylated N-acetyllactosaminyl oligosaccharides (alpha-2,3-, alpha-2,6-, or alpha-2,8-linked sialic acid), including NCAM1, NCAM1 N-glycans, FETUB N-glycans, and to a lesser extent sialylparagloboside (SPG) and AHSG, which does not require the initial addition of an alpha 2,8-sialic acid. However, does not exhibit sialic acid-polymerase activity. Catalyzes polysialic acid synthesis in the hippocampal on NCAM1 and supports neurite outgrowth. ST8SIA2-mediated polysialylation influences on oligodendrocyte differentiation and may promote the integrity of myelin and axons. This chain is Alpha-2,8-sialyltransferase 8B, found in Mus musculus (Mouse).